A 74-amino-acid chain; its full sequence is Toxin Td6 (74 aa).

The N-terminal stretch at 1-8 (IGMIVECE) is a signal peptide. The LCN-type CS-alpha/beta domain occupies 9–71 (KEGYLMEANG…IWDSATNTCG (63 aa)). Cystine bridges form between Cys-19–Cys-70, Cys-23–Cys-45, Cys-31–Cys-51, and Cys-35–Cys-53. Arg-72 carries the arginine amide modification.

It belongs to the long (4 C-C) scorpion toxin superfamily. Sodium channel inhibitor family. Beta subfamily. In terms of tissue distribution, expressed by the venom gland.

The protein resides in the secreted. In terms of biological role, beta toxins bind voltage-independently at site-4 of sodium channels (Nav) and shift the voltage of activation toward more negative potentials thereby affecting sodium channel activation and promoting spontaneous and repetitive firing. This Tityus discrepans (Venezuelan scorpion) protein is Toxin Td6.